Consider the following 251-residue polypeptide: Probable ATP-dependent transporter ycf16 (251 aa).

The 243-residue stretch at 8-250 (LEIKNLKACI…ELESKGYEWL (243 aa)) folds into the ABC transporter domain. 40 to 47 (GPNGSGKS) serves as a coordination point for ATP.

This sequence belongs to the ABC transporter superfamily. Ycf16 family.

The protein resides in the plastid. Its subcellular location is the chloroplast. The sequence is that of Probable ATP-dependent transporter ycf16 (ycf16) from Trieres chinensis (Marine centric diatom).